The primary structure comprises 278 residues: Indole-3-glycerol phosphate synthase (278 aa).

This sequence belongs to the TrpC family.

It carries out the reaction 1-(2-carboxyphenylamino)-1-deoxy-D-ribulose 5-phosphate + H(+) = (1S,2R)-1-C-(indol-3-yl)glycerol 3-phosphate + CO2 + H2O. The protein operates within amino-acid biosynthesis; L-tryptophan biosynthesis; L-tryptophan from chorismate: step 4/5. The sequence is that of Indole-3-glycerol phosphate synthase from Pseudomonas fluorescens (strain SBW25).